A 170-amino-acid polypeptide reads, in one-letter code: MKVIIASQNPAKIAAVESAFNLAFPNDTFSFEGVSVKSGVPDQPMSCEETKQGAMNRINNAKIKLPNCDYYVGLEAGIEGNSTFAWMIIDNGLTVGESRSSSLPLPPQVIDEVKKGKELGDVMDEQFNTDNIKQKGGAIGLLTNNLLTRTSVYQQALILALIPFLHPTRF.

The protein belongs to the YjjX NTPase family. As to quaternary structure, homodimer. Requires Mg(2+) as cofactor. Mn(2+) is required as a cofactor.

The catalysed reaction is XTP + H2O = XDP + phosphate + H(+). It carries out the reaction ITP + H2O = IDP + phosphate + H(+). Its function is as follows. Phosphatase that hydrolyzes non-canonical purine nucleotides such as XTP and ITP to their respective diphosphate derivatives. Probably excludes non-canonical purines from DNA/RNA precursor pool, thus preventing their incorporation into DNA/RNA and avoiding chromosomal lesions. This is Inosine/xanthosine triphosphatase from Aliivibrio fischeri (strain ATCC 700601 / ES114) (Vibrio fischeri).